The following is a 122-amino-acid chain: Large ribosomal subunit protein bL19 (122 aa).

Belongs to the bacterial ribosomal protein bL19 family.

Functionally, this protein is located at the 30S-50S ribosomal subunit interface and may play a role in the structure and function of the aminoacyl-tRNA binding site. The protein is Large ribosomal subunit protein bL19 of Prosthecochloris aestuarii (strain DSM 271 / SK 413).